The sequence spans 501 residues: Phosphoethanolamine N-methyltransferase 1 (501 aa).

Positions 72, 77, 93, 118, 119, and 137 each coordinate S-adenosyl-L-homocysteine. Phosphocholine contacts are provided by Ser170, Thr175, Gly176, Arg180, and Tyr187. N-methylethanolamine phosphate contacts are provided by residues 256–257 (QY) and Tyr265. A phosphocholine-binding site is contributed by Tyr265. S-adenosyl-L-homocysteine is bound by residues Val274, Ser275, Gly301, Asp323, Asp349, Cys350, and Arg366. Residues Tyr397, Tyr411, Arg415, Tyr417, and Lys483 each coordinate phosphocholine. Residues Tyr397, Tyr411, 415 to 417 (RGY), and Lys483 each bind N-methylethanolamine phosphate.

The protein belongs to the class I-like SAM-binding methyltransferase superfamily. PEAMT family.

The enzyme catalyses phosphoethanolamine + S-adenosyl-L-methionine = N-methylethanolamine phosphate + S-adenosyl-L-homocysteine + H(+). It catalyses the reaction N-methylethanolamine phosphate + S-adenosyl-L-methionine = N,N-dimethylethanolamine phosphate + S-adenosyl-L-homocysteine + H(+). It carries out the reaction N,N-dimethylethanolamine phosphate + S-adenosyl-L-methionine = phosphocholine + S-adenosyl-L-homocysteine + H(+). Its pathway is phospholipid metabolism; phosphatidylcholine biosynthesis; phosphocholine from phosphoethanolamine: step 1/1. Functionally, involved in phosphocholine biosynthesis. Catalyzes the N-methylation of phosphoethanolamine, phosphomonomethylethanolamine and phosphodimethylethanolamine, the three methylation steps required to convert phosphoethanolamine to phosphocholine (PC). May be involved in root development. This chain is Phosphoethanolamine N-methyltransferase 1, found in Zea mays (Maize).